The chain runs to 239 residues: Probable transcriptional regulatory protein Tcr_1104 (239 aa).

The protein belongs to the TACO1 family.

The protein localises to the cytoplasm. In Hydrogenovibrio crunogenus (strain DSM 25203 / XCL-2) (Thiomicrospira crunogena), this protein is Probable transcriptional regulatory protein Tcr_1104.